The sequence spans 384 residues: Probable fructokinase-6, chloroplastic (384 aa).

Residues 1 to 46 (MALQATTTTFCFSGPTFRSTPHSLTSKRPISIKATTSSPSRLSNSR) constitute a chloroplast transit peptide. Positions 34-61 (ATTSSPSRLSNSRSNLKGRALSSDGSTQ) are disordered. Over residues 35 to 48 (TTSSPSRLSNSRSN) the composition is skewed to low complexity.

This sequence belongs to the carbohydrate kinase PfkB family.

The protein resides in the plastid. Its subcellular location is the chloroplast. The catalysed reaction is D-fructose + ATP = D-fructose 6-phosphate + ADP + H(+). It functions in the pathway glycan biosynthesis; starch biosynthesis. Its function is as follows. May play an important role in maintaining the flux of carbon towards starch formation. This Arabidopsis thaliana (Mouse-ear cress) protein is Probable fructokinase-6, chloroplastic.